A 363-amino-acid polypeptide reads, in one-letter code: tRNA U34 carboxymethyltransferase (363 aa).

Residues K101, W134, K139, G159, 181 to 183 (DPS), 221 to 222 (LE), M237, Y241, and R356 each bind carboxy-S-adenosyl-L-methionine.

This sequence belongs to the class I-like SAM-binding methyltransferase superfamily. CmoB family. Homotetramer.

It catalyses the reaction carboxy-S-adenosyl-L-methionine + 5-hydroxyuridine(34) in tRNA = 5-carboxymethoxyuridine(34) in tRNA + S-adenosyl-L-homocysteine + H(+). Catalyzes carboxymethyl transfer from carboxy-S-adenosyl-L-methionine (Cx-SAM) to 5-hydroxyuridine (ho5U) to form 5-carboxymethoxyuridine (cmo5U) at position 34 in tRNAs. The sequence is that of tRNA U34 carboxymethyltransferase from Psychrobacter cryohalolentis (strain ATCC BAA-1226 / DSM 17306 / VKM B-2378 / K5).